The sequence spans 431 residues: Histidinol dehydrogenase (431 aa).

3 residues coordinate NAD(+): Y127, Q190, and N213. S238, Q260, and H263 together coordinate substrate. Zn(2+) is bound by residues Q260 and H263. Residues E329 and H330 each act as proton acceptor in the active site. H330, D363, E417, and H422 together coordinate substrate. D363 provides a ligand contact to Zn(2+). A Zn(2+)-binding site is contributed by H422.

The protein belongs to the histidinol dehydrogenase family. The cofactor is Zn(2+).

The enzyme catalyses L-histidinol + 2 NAD(+) + H2O = L-histidine + 2 NADH + 3 H(+). It functions in the pathway amino-acid biosynthesis; L-histidine biosynthesis; L-histidine from 5-phospho-alpha-D-ribose 1-diphosphate: step 9/9. Functionally, catalyzes the sequential NAD-dependent oxidations of L-histidinol to L-histidinaldehyde and then to L-histidine. In Methanopyrus kandleri (strain AV19 / DSM 6324 / JCM 9639 / NBRC 100938), this protein is Histidinol dehydrogenase.